A 419-amino-acid chain; its full sequence is MSHSEAMKAVAVKAKEASRKIACADGTARNAAIIELAALLEQEKEFIFAENKKDLDAAKERGLDQARLQRLEITPSVLEYMIQGCNEVAGQADPVGEIEKMERRPNGMMVGKMRIPLGVIMMIFESRPNVTVDAAVLCLKAGNSVILRGGSEAIHSNLALASLLQKALGKADLPAEAVQVVEVTDREAVGELLKLDEYIDVVIPRGGEGLIRAVVSQATMPVLKHYKGVCHMYVDSDCEIPEAMDIIKNAKTQKPAACNSLECLLVHEDIAKEILPSLGVLLGACGVTMKGCPRAMPLLGPKAIAADFDDWGMEYLDLILCVKVVSTQDEAQDHISRYGSNHSEVILTKNHDRAMRFIREVDASMVGVNASTRFNDGGQLGLGAEIGISTSKLHSYGPMGATELTSTKFVLLGNWDVRN.

It belongs to the gamma-glutamyl phosphate reductase family.

The protein localises to the cytoplasm. The catalysed reaction is L-glutamate 5-semialdehyde + phosphate + NADP(+) = L-glutamyl 5-phosphate + NADPH + H(+). The protein operates within amino-acid biosynthesis; L-proline biosynthesis; L-glutamate 5-semialdehyde from L-glutamate: step 2/2. Catalyzes the NADPH-dependent reduction of L-glutamate 5-phosphate into L-glutamate 5-semialdehyde and phosphate. The product spontaneously undergoes cyclization to form 1-pyrroline-5-carboxylate. This is Gamma-glutamyl phosphate reductase from Maridesulfovibrio salexigens (strain ATCC 14822 / DSM 2638 / NCIMB 8403 / VKM B-1763) (Desulfovibrio salexigens).